A 1309-amino-acid polypeptide reads, in one-letter code: Lysine-specific demethylase 2B (1309 aa).

The residue at position 26 (Ser26) is a Phosphoserine. Positions 147 to 315 (FSHTKLEHLV…MQLRIYEIED (169 aa)) constitute a JmjC domain. Substrate is bound at residue Thr208. The Fe cation site is built by His211 and Asp213. Lys228 serves as a coordination point for substrate. Fe cation is bound at residue His283. A compositionally biased stretch (acidic residues) spans 378 to 403 (DMEEESCEQQPQEEEEEEEDKEEEGD). Residues 378–476 (DMEEESCEQQ…PTGSPATEVS (99 aa)) are disordered. The segment covering 404–413 (GADKTPKPPT) has biased composition (basic and acidic residues). The segment covering 415–424 (DPTSPTSTPP) has biased composition (low complexity). Ser447 and Ser450 each carry phosphoserine. Thr466 is subject to Phosphothreonine. The segment covering 467–476 (PTGSPATEVS) has biased composition (polar residues). Phosphoserine is present on Ser470. The CXXC-type zinc finger occupies 579–625 (ARRRRTRCRKCEACLRTECGECHFCKDMKKFGGPGRMKQSCIMRQCI). Zn(2+)-binding residues include Cys586, Cys589, Cys592, Cys597, Cys600, Cys603, Cys619, Cys624, Cys635, Cys638, Cys661, Cys664, His669, Cys672, Cys692, and Cys695. The PHD-type zinc finger occupies 632-698 (TAVCLVCGEA…CWECPKCNHA (67 aa)). Disordered regions lie at residues 700 to 816 (KTGK…SLSP) and 828 to 1005 (QLKP…SASP). Residues 722 to 772 (KEQKMNRDNKEGQEPAKRRSECEEAPRRRSDEHPKKVPADGILRRKSDDVH) are compositionally biased toward basic and acidic residues. Over residues 792-816 (SSLQTSPGSSSHLSPRPPLGSSLSP) the composition is skewed to low complexity. Residues Lys830 and Lys863 each participate in a glycyl lysine isopeptide (Lys-Gly) (interchain with G-Cter in SUMO2) cross-link. The span at 883–892 (SRSSSPTAGP) shows a compositional bias: polar residues. Basic residues predominate over residues 905–914 (KVKMRRKRRL). Residues 915–933 (VNKELSKELSKELNHEIQK) are compositionally biased toward basic and acidic residues. The stretch at 916-944 (NKELSKELSKELNHEIQKTESTLAHESQQ) forms a coiled coil. Residue Ser924 is modified to Phosphoserine. Residues 934–946 (TESTLAHESQQPI) show a composition bias toward polar residues. Residues Ser948 and Ser952 each carry the phosphoserine modification. Positions 955–968 (DEPKRPLSHCERPH) are enriched in basic and acidic residues. Phosphoserine is present on residues Ser991 and Ser1004. Positions 1032–1078 (DGAAHVMHREVWMAVFSYLSHRDLCVCMRVCRTWNRWCCDKRLWTRI) constitute an F-box domain. LRR repeat units follow at residues 1106–1127 (WTNI…LRDL), 1129–1155 (LSGC…DVQW), 1195–1220 (GLDI…QLSY), 1221–1250 (CNHI…NLSD), 1251–1275 (CNKV…DLRY), and 1276–1309 (CKQV…QKLS).

It belongs to the JHDM1 histone demethylase family. As to quaternary structure, interacts with SKP1, forming heterodimers. The KDM2B-SKP1 heterodimeric complex interacts with the PCGF1-BCORL heterodimeric complex to form a homotetrameric polycomb repression complex 1 (PRC1.1). Directly interacts with CUL1. The SKP1-KDM2B interacts with UBB. It depends on Fe(2+) as a cofactor.

The protein resides in the nucleus. The protein localises to the nucleolus. It is found in the chromosome. It carries out the reaction N(6),N(6)-dimethyl-L-lysyl(36)-[histone H3] + 2 2-oxoglutarate + 2 O2 = L-lysyl(36)-[histone H3] + 2 formaldehyde + 2 succinate + 2 CO2. With respect to regulation, histone demethylase activity is inhibited by fumarate. Its function is as follows. Histone demethylase that demethylates 'Lys-4' and 'Lys-36' of histone H3, thereby playing a central role in histone code. Preferentially demethylates trimethylated H3 'Lys-4' and dimethylated H3 'Lys-36' residue while it has weak or no activity for mono- and tri-methylated H3 'Lys-36'. Preferentially binds the transcribed region of ribosomal RNA and represses the transcription of ribosomal RNA genes which inhibits cell growth and proliferation. May also serve as a substrate-recognition component of the SCF (SKP1-CUL1-F-box protein)-type E3 ubiquitin ligase complex. The chain is Lysine-specific demethylase 2B (Kdm2b) from Mus musculus (Mouse).